A 545-amino-acid chain; its full sequence is Chaperonin GroEL (545 aa).

ATP is bound by residues 30 to 33, K51, 87 to 91, G415, and D495; these read TLGP and DGTTT.

It belongs to the chaperonin (HSP60) family. Forms a cylinder of 14 subunits composed of two heptameric rings stacked back-to-back. Interacts with the co-chaperonin GroES.

The protein resides in the cytoplasm. The enzyme catalyses ATP + H2O + a folded polypeptide = ADP + phosphate + an unfolded polypeptide.. Its function is as follows. Together with its co-chaperonin GroES, plays an essential role in assisting protein folding. The GroEL-GroES system forms a nano-cage that allows encapsulation of the non-native substrate proteins and provides a physical environment optimized to promote and accelerate protein folding. This chain is Chaperonin GroEL, found in Shewanella sp. (strain W3-18-1).